Consider the following 94-residue polypeptide: Small ribosomal subunit protein eS24 (94 aa).

Belongs to the eukaryotic ribosomal protein eS24 family.

The sequence is that of Small ribosomal subunit protein eS24 from Nanoarchaeum equitans (strain Kin4-M).